A 731-amino-acid polypeptide reads, in one-letter code: Cell death abnormality protein 12 (731 aa).

An ELMO domain is found at 339 to 485 (AEVQKILDIE…VVLEQLRHVL (147 aa)). The 136-residue stretch at 544 to 679 (VRINHLNYLK…WLEGLAELIG (136 aa)) folds into the PH domain. Positions 715–718 (PEIP) match the SH3-binding motif.

As to quaternary structure, interacts with psr-1. Forms a ternary complex with ced-2 and ced-5.

The protein localises to the cytoplasm. Functionally, involved in programmed apoptosis and necrosis. Required for the cell corpse engulfment process. Has roles in the formation of actin halos and distal tip cell migration. Negatively regulates the unc-6/Netrin receptor unc-5 to control distal tip cell migration along the anterior-posterior axis of the body. Plays no role in amphid axon outgrowth. This Caenorhabditis elegans protein is Cell death abnormality protein 12.